Consider the following 433-residue polypeptide: D-amino acid dehydrogenase (433 aa).

I3–W17 contacts FAD.

It belongs to the DadA oxidoreductase family. FAD serves as cofactor.

The enzyme catalyses a D-alpha-amino acid + A + H2O = a 2-oxocarboxylate + AH2 + NH4(+). Its pathway is amino-acid degradation; D-alanine degradation; NH(3) and pyruvate from D-alanine: step 1/1. In terms of biological role, oxidative deamination of D-amino acids. This is D-amino acid dehydrogenase from Paracoccus denitrificans (strain Pd 1222).